Here is a 692-residue protein sequence, read N- to C-terminus: Follicle-stimulating hormone receptor (692 aa).

Residues 1-17 (MALLLVSLLAFLGSGSG) form the signal peptide. 2 cysteine pairs are disulfide-bonded: cysteine 18–cysteine 25 and cysteine 23–cysteine 32. In terms of domain architecture, LRRNT spans 18-46 (CHHWLCHCSNRVFLCQDSKVTEIPPDLPR). Over 18 to 365 (CHHWLCHCSN…EDIMGYNILR (348 aa)) the chain is Extracellular. LRR repeat units lie at residues 49–72 (IELR…FGDL), 73–97 (EKIE…LPNL), 98–118 (HEIR…AFQN), 119–143 (LPSL…KIQS), 144–169 (LQKV…MGLS), 170–192 (FESV…AFNG), 193–216 (TQLD…VFQG), 217–240 (ASGP…GLEN), and 241–259 (LKKL…PSLD). N-linked (GlcNAc...) asparagine glycans are attached at residues asparagine 191 and asparagine 199. Intrachain disulfides connect cysteine 275–cysteine 345, cysteine 276–cysteine 292, cysteine 276–cysteine 355, and cysteine 292–cysteine 337. Asparagine 293 carries an N-linked (GlcNAc...) asparagine glycan. Tyrosine 334 is modified (sulfotyrosine). Residues 366–386 (VLIWFISILAITGNTTVLVVL) form a helical membrane-spanning segment. At 387–397 (TTSQYKLTVPR) the chain is on the cytoplasmic side. The chain crosses the membrane as a helical span at residues 398 to 420 (FLMCNLAFADLCIGIYLLLIASV). Over 421-442 (DIHTKSQYHNYAIDWQTGAGCD) the chain is Extracellular. Cysteine 441 and cysteine 516 are joined by a disulfide. Residues 443–464 (AAGFFTVFASELSVYTLAAITL) form a helical membrane-spanning segment. Residues 465 to 484 (ERWHTITHAMQLECKVQLCH) are Cytoplasmic-facing. Residues 485–507 (AASIMVLGWAFAFAAALFPIFGI) form a helical membrane-spanning segment. The Extracellular segment spans residues 508–527 (SSYMKVSICLPMDIDSPLSQ). The helical transmembrane segment at 528 to 549 (LYVMALLVLNALAFVVICGCYT) threads the bilayer. Residues 550-572 (HIYLTVRNPNIVSSSRDTKIAKR) are Cytoplasmic-facing. A helical transmembrane segment spans residues 573–596 (MATLIFTDFLCMAPILFFAISASL). Residues 597–607 (KVPLITVSKAK) lie on the Extracellular side of the membrane. Residues 608–629 (ILLVLFYPINSCANPFLYAIFT) form a helical membrane-spanning segment. Topologically, residues 630 to 692 (KNFRRDFFVL…LVPLNHSVQN (63 aa)) are cytoplasmic.

It belongs to the G-protein coupled receptor 1 family. FSH/LSH/TSH subfamily. As to quaternary structure, homotrimer. Functions as a homotrimer binding the FSH hormone heterodimer composed of CGA and FSHB. Interacts with ARRB2. Interacts with APPL2; interaction is independent of follicle stimulating hormone stimulation. N-glycosylated; indirectly required for FSH-binding, possibly via a conformational change that allows high affinity binding of hormone. Post-translationally, sulfated.

It is found in the cell membrane. G protein-coupled receptor for follitropin, the follicle-stimulating hormone. Through cAMP production activates the downstream PI3K-AKT and ERK1/ERK2 signaling pathways. In Mus musculus (Mouse), this protein is Follicle-stimulating hormone receptor (Fshr).